The following is a 588-amino-acid chain: Calicin (588 aa).

The BTB domain occupies 12-124 (SFVLQNLNRQ…RLRVHCNDFL (113 aa)). Residues 133–235 (CLRYLFLAEL…NAVSNKTLVF (103 aa)) form the BACK domain. Serine 149 is subject to Phosphoserine. 6 Kelch repeats span residues 280-327 (SVVI…SAGR), 328-375 (YIYI…TCGG), 377-423 (VYSV…TKGD), 425-475 (HLYI…SFQQ), 476-525 (DNIL…IGDS), and 526-580 (KVFV…LAKL).

As to quaternary structure, interacts with CYLC1; the interaction may be relevant for proper acrosome attachment to the nuclear envelope. As to expression, expressed in testis, in spermatozoa (at protein level).

It localises to the cytoplasm. The protein localises to the cytoskeleton. It is found in the perinuclear theca. The protein resides in the calyx. In terms of biological role, required for both nuclear and acrosomal shaping during spermiogenesis. The protein is Calicin (CCIN) of Homo sapiens (Human).